The following is a 397-amino-acid chain: Transaldolase (397 aa).

The active-site Schiff-base intermediate with substrate is lysine 136.

It belongs to the transaldolase family. Type 1 subfamily. Homodimer.

It localises to the cytoplasm. The catalysed reaction is D-sedoheptulose 7-phosphate + D-glyceraldehyde 3-phosphate = D-erythrose 4-phosphate + beta-D-fructose 6-phosphate. It participates in carbohydrate degradation; pentose phosphate pathway; D-glyceraldehyde 3-phosphate and beta-D-fructose 6-phosphate from D-ribose 5-phosphate and D-xylulose 5-phosphate (non-oxidative stage): step 2/3. In terms of biological role, transaldolase is important for the balance of metabolites in the pentose-phosphate pathway. In Synechococcus sp. (strain ATCC 27144 / PCC 6301 / SAUG 1402/1) (Anacystis nidulans), this protein is Transaldolase.